Consider the following 311-residue polypeptide: Cytochrome f (311 aa).

The first 27 residues, 1 to 27 (MKHFFKSLTLAIALAASVLFWSPQAQA), serve as a signal peptide directing secretion. Residues Tyr28, Cys48, Cys51, and His52 each contribute to the heme site. A helical transmembrane segment spans residues 279–296 (WLLVFFAAITLSQILLVL).

Belongs to the cytochrome f family. The 4 large subunits of the cytochrome b6-f complex are cytochrome b6, subunit IV (17 kDa polypeptide, PetD), cytochrome f and the Rieske protein, while the 4 small subunits are PetG, PetL, PetM and PetN. The complex functions as a dimer. It depends on heme as a cofactor.

The protein localises to the cellular thylakoid membrane. Its function is as follows. Component of the cytochrome b6-f complex, which mediates electron transfer between photosystem II (PSII) and photosystem I (PSI), cyclic electron flow around PSI, and state transitions. This is Cytochrome f from Synechococcus elongatus.